Consider the following 172-residue polypeptide: Small ribosomal subunit protein uS5 (172 aa).

Residues 17–80 (LREKMIAVNR…DEARRKMIKV (64 aa)) form the S5 DRBM domain.

Belongs to the universal ribosomal protein uS5 family. As to quaternary structure, part of the 30S ribosomal subunit. Contacts proteins S4 and S8.

In terms of biological role, with S4 and S12 plays an important role in translational accuracy. Functionally, located at the back of the 30S subunit body where it stabilizes the conformation of the head with respect to the body. The chain is Small ribosomal subunit protein uS5 from Polynucleobacter asymbioticus (strain DSM 18221 / CIP 109841 / QLW-P1DMWA-1) (Polynucleobacter necessarius subsp. asymbioticus).